We begin with the raw amino-acid sequence, 1106 residues long: Communication mutant protein F (1106 aa).

The signal sequence occupies residues 1 to 28; sequence MKIYKKNHFLKILIIFIYLSCNILKVNA. The region spanning 254 to 380 is the G8 domain; sequence TIWPNGVVPS…YHNTWSKLAS (127 aa). 7 N-linked (GlcNAc...) asparagine glycosylation sites follow: asparagine 267, asparagine 306, asparagine 512, asparagine 536, asparagine 677, asparagine 715, and asparagine 833.

The protein belongs to the comF family.

The protein resides in the secreted. The polypeptide is Communication mutant protein F (comF-1) (Dictyostelium discoideum (Social amoeba)).